The following is a 285-amino-acid chain: Baculoviral IAP repeat-containing protein 7 (285 aa).

Residues 18-47 (ESRARDSVRGPELSHREDGSGRTQEQDKPH) are disordered. Basic and acidic residues predominate over residues 19–47 (SRARDSVRGPELSHREDGSGRTQEQDKPH). Residues 96-161 (RLASFYDWPS…RWFPRCQFLL (66 aa)) form a BIR repeat. Zn(2+) is bound by residues Cys130, Cys133, His150, and Cys157. Residues 184-225 (QREEPEDAVSATPSAPAHGSPELLRSRRETQPEDVSEPGAKD) are disordered. Residues 239–273 (CKVCLDRAVSIVFVPCGHFVCTECAPNLQLCPICR) form an RING-type zinc finger.

This sequence belongs to the IAP family. Binds to caspase-9. Interaction with DIABLO/SMAC via the BIR domain disrupts binding to caspase-9 and apoptotic suppressor activity. Interacts with TAB1. In vitro, interacts with caspase-3 and caspase-7 via its BIR domain. Autoubiquitinated and undergoes proteasome-mediated degradation. In terms of processing, the truncated protein (tLivin) not only loses its anti-apoptotic effect but also acquires a pro-apoptotic effect.

Its subcellular location is the nucleus. It localises to the cytoplasm. The protein localises to the golgi apparatus. The enzyme catalyses S-ubiquitinyl-[E2 ubiquitin-conjugating enzyme]-L-cysteine + [acceptor protein]-L-lysine = [E2 ubiquitin-conjugating enzyme]-L-cysteine + N(6)-ubiquitinyl-[acceptor protein]-L-lysine.. Apoptotic regulator capable of exerting proapoptotic and anti-apoptotic activities and plays crucial roles in apoptosis, cell proliferation, and cell cycle control. Its anti-apoptotic activity is mediated through the inhibition of CASP3, CASP7 and CASP9, as well as by its E3 ubiquitin-protein ligase activity. As it is a weak caspase inhibitor, its anti-apoptotic activity is thought to be due to its ability to ubiquitinate DIABLO/SMAC targeting it for degradation thereby promoting cell survival. May contribute to caspase inhibition, by blocking the ability of DIABLO/SMAC to disrupt XIAP/BIRC4-caspase interactions. Protects against apoptosis induced by TNF or by chemical agents such as adriamycin, etoposide or staurosporine. Suppression of apoptosis is mediated by activation of MAPK8/JNK1, and possibly also of MAPK9/JNK2. This activation depends on TAB1 and MAP3K7/TAK1. In vitro, inhibits CASP3 and proteolytic activation of pro-CASP9. The protein is Baculoviral IAP repeat-containing protein 7 (Birc7) of Mus musculus (Mouse).